A 450-amino-acid chain; its full sequence is Methionine aminopeptidase 2 (450 aa).

Positions 1–99 (MAVQAPEVDK…LFPNSQYPEG (99 aa)) are disordered. Positions 33–49 (GDEDAENEESDEDDDQG) are enriched in acidic residues. Residues 60–75 (KKKRKRKPKKKKKKGV) show a composition bias toward basic residues. H200 contacts substrate. Positions 220, 231, and 300 each coordinate a divalent metal cation. H308 serves as a coordination point for substrate. Positions 336 and 431 each coordinate a divalent metal cation.

Belongs to the peptidase M24A family. Methionine aminopeptidase eukaryotic type 2 subfamily. Requires Co(2+) as cofactor. Zn(2+) serves as cofactor. The cofactor is Mn(2+). It depends on Fe(2+) as a cofactor.

The protein resides in the cytoplasm. It catalyses the reaction Release of N-terminal amino acids, preferentially methionine, from peptides and arylamides.. Functionally, cotranslationally removes the N-terminal methionine from nascent proteins. The N-terminal methionine is often cleaved when the second residue in the primary sequence is small and uncharged (Met-Ala-, Cys, Gly, Pro, Ser, Thr, or Val). This chain is Methionine aminopeptidase 2, found in Uncinocarpus reesii (strain UAMH 1704).